A 442-amino-acid chain; its full sequence is D-aminoacyl-tRNA deacylase (442 aa).

Belongs to the DtdA deacylase family. Monomer. It depends on Zn(2+) as a cofactor.

The enzyme catalyses a D-aminoacyl-tRNA + H2O = a tRNA + a D-alpha-amino acid + H(+). It carries out the reaction glycyl-tRNA(Ala) + H2O = tRNA(Ala) + glycine + H(+). Its function is as follows. D-aminoacyl-tRNA deacylase with broad substrate specificity. By recycling D-aminoacyl-tRNA to D-amino acids and free tRNA molecules, this enzyme counteracts the toxicity associated with the formation of D-aminoacyl-tRNA entities in vivo. The protein is D-aminoacyl-tRNA deacylase of Methanospirillum hungatei JF-1 (strain ATCC 27890 / DSM 864 / NBRC 100397 / JF-1).